Here is a 268-residue protein sequence, read N- to C-terminus: MEEEGLAIDDVQGRADLRRIDIDRVGIKGIRHPVRVRDRSLGEQHTVARFDMAVSLPHHFKGTHMSRFVEIINGHDREIDIASFEAMLAEMMQRLNAEAGRIEMRFPYFLEKRAPVTGVRSLMDYEVALIGEVSVATTTTWLGVTVPVTSLCPCSKAISERGAHNQRSHVTTAVRMRDFVWIEELIEWVEAEASSPIYGLLKRPDEKYVTEYAYDHPRFVEDLVRGVAARLDTEPRIAAYAVEVENFESIHNHSAYALIERDKRTADA.

It belongs to the GTP cyclohydrolase IV family.

The enzyme catalyses GTP + H2O = 7,8-dihydroneopterin 3'-triphosphate + formate + H(+). It participates in cofactor biosynthesis; 7,8-dihydroneopterin triphosphate biosynthesis; 7,8-dihydroneopterin triphosphate from GTP: step 1/1. In terms of biological role, converts GTP to 7,8-dihydroneopterin triphosphate. The protein is GTP cyclohydrolase FolE2 of Methylococcus capsulatus (strain ATCC 33009 / NCIMB 11132 / Bath).